We begin with the raw amino-acid sequence, 479 residues long: Nucleoside-diphosphatase uda-1 (479 aa).

Residues 1-7 lie on the Cytoplasmic side of the membrane; it reads MLFPAFS. The chain crosses the membrane as a helical; Signal-anchor for type II membrane protein span at residues 8-24; it reads ILLISFFSLLSVVTTKT. The Lumenal portion of the chain corresponds to 25 to 479; sequence QYWCHGDGVL…VLSYFNIISV (455 aa). Catalysis depends on Glu171, which acts as the Proton acceptor. N-linked (GlcNAc...) asparagine glycosylation is found at Asn300 and Asn452.

This sequence belongs to the GDA1/CD39 NTPase family. Ca(2+) is required as a cofactor. Mg(2+) serves as cofactor. It depends on Mn(2+) as a cofactor.

It localises to the endomembrane system. The catalysed reaction is a ribonucleoside 5'-diphosphate + H2O = a ribonucleoside 5'-phosphate + phosphate + H(+). Its function is as follows. Hydrolyzes UDP and GDP but not any other nucleoside di-, mono- or triphosphates. May promote reglycosylation reactions involved in glycoproteins folding and quality control in the endoplasmic reticulum. This Caenorhabditis elegans protein is Nucleoside-diphosphatase uda-1 (uda-1).